The following is a 438-amino-acid chain: Glutaryl-CoA dehydrogenase, mitochondrial (438 aa).

Residues 1–44 (MALRGVYAQLLNRGPGLRVFRSWSSATAQTEKGEKTQSRSAKPS) constitute a mitochondrion transit peptide. Residues 138-139 (RS) and Ser186 contribute to the substrate site. FAD-binding positions include 177–186 (FGLTEPNHGS), Ser186, and 212–214 (WIT). Lys240 carries the post-translational modification N6-acetyllysine. A substrate-binding site is contributed by 287–294 (FGCLNNAR). Residues Arg319, Gln330, and 387 to 391 (DMLGG) each bind FAD. Glu414 acts as the Proton acceptor in catalysis. Gly415 serves as a coordination point for substrate. FAD is bound by residues Thr416, 416–418 (THD), and Phe434.

This sequence belongs to the acyl-CoA dehydrogenase family. As to quaternary structure, homotetramer. It depends on FAD as a cofactor.

It localises to the mitochondrion matrix. The catalysed reaction is glutaryl-CoA + oxidized [electron-transfer flavoprotein] + 2 H(+) = (2E)-butenoyl-CoA + reduced [electron-transfer flavoprotein] + CO2. It functions in the pathway amino-acid metabolism; lysine degradation. It participates in amino-acid metabolism; tryptophan metabolism. Its function is as follows. Catalyzes the oxidative decarboxylation of glutaryl-CoA to crotonyl-CoA and CO(2) in the degradative pathway of L-lysine, L-hydroxylysine, and L-tryptophan metabolism. It uses electron transfer flavoprotein as its electron acceptor. The sequence is that of Glutaryl-CoA dehydrogenase, mitochondrial (GCDH) from Bos taurus (Bovine).